We begin with the raw amino-acid sequence, 309 residues long: Dicarboxylate carrier UCP2 (309 aa).

Over 1 to 16 (MVGFKATDVPPTATVK) the chain is Mitochondrial intermembrane. Solcar repeat units lie at residues 11–106 (PTAT…VKQF), 114–203 (AGIG…IKDA), and 212–297 (DDLP…LKRA). Residues 16-63 (KFLGAGTAACIADLITFPLDTAKVRLQIQGERQGPVRAAASAQYRGVL) form an important for interaction with long-chain fatty acids region. Residues 17–40 (FLGAGTAACIADLITFPLDTAKVR) traverse the membrane as a helical segment. Residues 41-77 (LQIQGERQGPVRAAASAQYRGVLCTILTMVRTEGPRS) are Mitochondrial matrix-facing. The helical transmembrane segment at 78–103 (LYSGLVAGLQRQMSFASVRIGLYDSV) threads the bilayer. The Mitochondrial intermembrane portion of the chain corresponds to 104 to 119 (KQFYTKGSEHAGIGSR). A helical membrane pass occupies residues 120 to 145 (LLAGSTTGALAVAVAQPTDVVKVRFQ). The Mitochondrial matrix portion of the chain corresponds to 146–173 (AQARAGSGRRYQSTVDAYKTIAREEGFR). A helical transmembrane segment spans residues 174 to 199 (GLWKGTSPNVARNAIVNCAELVTYDL). Topologically, residues 200–217 (IKDALLKANLMTDDLPCH) are mitochondrial intermembrane. The helical transmembrane segment at 218–242 (FTSAFGAGFCTTVIASPVDVVKTRY) threads the bilayer. The Mitochondrial matrix segment spans residues 243 to 268 (MNSALGQYSSAGHCALTMLQKEGPRA). Residues 269-294 (FYKGFMPSFLRLGSWNVVMFVTYEQL) traverse the membrane as a helical segment. An important for interaction with long-chain fatty acids region spans residues 278 to 285 (LRLGSWNV). At 295–309 (KRALMAACTSREAPF) the chain is on the mitochondrial intermembrane side.

It belongs to the mitochondrial carrier (TC 2.A.29) family. In terms of assembly, homotetramer. Adopts an asymmetrical dimer of dimers functional form. Interacts with MICU1 (when methylated); leading to decrease the calcium sensitivity of MICU1.

The protein resides in the mitochondrion inner membrane. It catalyses the reaction L-aspartate(out) + phosphate(in) + H(+)(in) = L-aspartate(in) + phosphate(out) + H(+)(out). The catalysed reaction is oxaloacetate(out) + phosphate(in) + H(+)(in) = oxaloacetate(in) + phosphate(out) + H(+)(out). It carries out the reaction (S)-malate(out) + phosphate(in) + H(+)(in) = (S)-malate(in) + phosphate(out) + H(+)(out). The enzyme catalyses malonate(out) + phosphate(in) + H(+)(in) = malonate(in) + phosphate(out) + H(+)(out). It catalyses the reaction sulfate(out) + phosphate(in) + H(+)(in) = sulfate(in) + phosphate(out) + H(+)(out). The catalysed reaction is (S)-malate(out) = (S)-malate(in). It carries out the reaction L-aspartate(out) = L-aspartate(in). The enzyme catalyses phosphate(in) = phosphate(out). It catalyses the reaction chloride(in) = chloride(out). The catalysed reaction is H(+)(in) = H(+)(out). It carries out the reaction a long-chain fatty acid(out) = a long-chain fatty acid(in). Its function is as follows. Antiporter that exports dicarboxylate intermediates of the Krebs cycle in exchange for phosphate plus a proton across the inner membrane of mitochondria, a process driven by mitochondrial motive force with an overall impact on glycolysis, glutaminolysis and glutathione-dependent redox balance. Continuous export of oxaloacetate and related four-carbon dicarboxylates from mitochondrial matrix into the cytosol negatively regulates the oxidation of acetyl-CoA substrates via the Krebs cycle lowering the ATP/ADP ratio and reactive oxygen species (ROS) production. May mediate inducible proton entry into the mitochondrial matrix affecting ATP turnover as a protection mechanism against oxidative stress. The proton currents are most likely associated with fatty acid flipping across the inner membrane of mitochondria in a metabolic process regulated by free fatty acids and purine nucleotides. Regulates the use of glucose as a source of energy. Required for glucose-induced DRP1-dependent mitochondrial fission and neuron activation in the ventromedial nucleus of the hypothalamus (VMH). This mitochondrial adaptation mechanism modulates the VMH pool of glucose-excited neurons with an impact on systemic glucose homeostasis. Regulates ROS levels and metabolic reprogramming of macrophages during the resolution phase of inflammation. Attenuates ROS production in response to IL33 to preserve the integrity of the Krebs cycle required for persistent production of itaconate and subsequent GATA3-dependent differentiation of inflammation-resolving alternatively activated macrophages. Can unidirectionally transport anions including L-malate, L-aspartate, phosphate and chloride ions. Does not mediate adaptive thermogenesis. The chain is Dicarboxylate carrier UCP2 (UCP2) from Canis lupus familiaris (Dog).